Consider the following 289-residue polypeptide: tRNA pseudouridine synthase A (289 aa).

The active-site Nucleophile is D67. A substrate-binding site is contributed by Y125.

Belongs to the tRNA pseudouridine synthase TruA family. As to quaternary structure, homodimer.

It catalyses the reaction uridine(38/39/40) in tRNA = pseudouridine(38/39/40) in tRNA. Functionally, formation of pseudouridine at positions 38, 39 and 40 in the anticodon stem and loop of transfer RNAs. The sequence is that of tRNA pseudouridine synthase A from Prochlorococcus marinus (strain MIT 9211).